We begin with the raw amino-acid sequence, 314 residues long: Acetyl-coenzyme A carboxylase carboxyl transferase subunit alpha (314 aa).

Residues 32–289 enclose the CoA carboxyltransferase C-terminal domain; it reads EIDMLEASLE…KSAFVEQLDS (258 aa).

Belongs to the AccA family. As to quaternary structure, acetyl-CoA carboxylase is a heterohexamer composed of biotin carboxyl carrier protein (AccB), biotin carboxylase (AccC) and two subunits each of ACCase subunit alpha (AccA) and ACCase subunit beta (AccD).

It localises to the cytoplasm. It carries out the reaction N(6)-carboxybiotinyl-L-lysyl-[protein] + acetyl-CoA = N(6)-biotinyl-L-lysyl-[protein] + malonyl-CoA. The protein operates within lipid metabolism; malonyl-CoA biosynthesis; malonyl-CoA from acetyl-CoA: step 1/1. Its function is as follows. Component of the acetyl coenzyme A carboxylase (ACC) complex. First, biotin carboxylase catalyzes the carboxylation of biotin on its carrier protein (BCCP) and then the CO(2) group is transferred by the carboxyltransferase to acetyl-CoA to form malonyl-CoA. The sequence is that of Acetyl-coenzyme A carboxylase carboxyl transferase subunit alpha from Staphylococcus aureus (strain bovine RF122 / ET3-1).